The following is a 117-amino-acid chain: Small ribosomal subunit protein bS6 (117 aa).

The segment at 96-117 (HDEGPSVQMQKRDEREGRRERR) is disordered.

The protein belongs to the bacterial ribosomal protein bS6 family.

Binds together with bS18 to 16S ribosomal RNA. This is Small ribosomal subunit protein bS6 from Jannaschia sp. (strain CCS1).